The chain runs to 1171 residues: DExH-box ATP-dependent RNA helicase DExH15 chloroplastic (1171 aa).

The N-terminal 58 residues, 1–58 (MNTLPVVSLTASSSFKFFHFPSLHRSLSHSPNFSFTKSLILNPNHLSFKSTLNSLSPS), are a transit peptide targeting the chloroplast. Residues 53–62 (NSLSPSQSQL) are compositionally biased toward polar residues. Residues 53 to 111 (NSLSPSQSQLYEEEDDEEEEEEDEDDDDEAADEYDNISDEIRNSDDDDDDEETEFSVDL) are disordered. 2 stretches are compositionally biased toward acidic residues: residues 63–90 (YEEE…DNIS) and 97–107 (DDDDDDEETEF). Positions 163–327 (IEAFLRGSSV…WIGEIHGKTE (165 aa)) constitute a Helicase ATP-binding domain. 176–183 (APTSSGKT) lines the ATP pocket. A DEVH box motif is present at residues 275–278 (DEVH). Positions 424 to 620 (QISDTLWHLQ…ASYGMVLNLV (197 aa)) constitute a Helicase C-terminal domain.

Belongs to the DExH box helicase family.

Its subcellular location is the plastid. The protein resides in the chloroplast. It is found in the cytoplasmic granule. It catalyses the reaction ATP + H2O = ADP + phosphate + H(+). In terms of biological role, RNA helicase involved in group II intron splicing. Essential protein required during embryogenesis. Involved in post-transcriptional gene silencing. Modulates the determination of cell fate. Necessary for normal plasmodesmata (PD) development and aperture regulation. The polypeptide is DExH-box ATP-dependent RNA helicase DExH15 chloroplastic (ISE2) (Arabidopsis thaliana (Mouse-ear cress)).